The sequence spans 321 residues: MQIKDEILSLLKRGKNLLAFSYGSDSSVLFYLLMQEKIDFDLVMINYKTRKNSDLEELKAKELALKFHKKIFIKHAPKFQSNFEKKARDFRYDFFEKICLEQGYDHLILAHHLNDQFEWFLMQLSRGAGLAEILGMQECEKRSNYTLLRPLLFISKDEISSFLKEKDIFYFHDESNENEKYFRNYIRKNFSNAFVSEFHQGLKRSFSYLDEDRKKLYDFENIKEIQGLLICPKNESLIARAVKMKGLLLSTAQRKELLKGDCVLGGKIALAYKNEQAIVFEYETCQKLPKNFKEECRIAKIPRLLRAYLYNHKIDISSLSF.

ATP is bound at residue 21–26; it reads SYGSDS.

It belongs to the tRNA(Ile)-lysidine synthase family.

It is found in the cytoplasm. It catalyses the reaction cytidine(34) in tRNA(Ile2) + L-lysine + ATP = lysidine(34) in tRNA(Ile2) + AMP + diphosphate + H(+). Ligates lysine onto the cytidine present at position 34 of the AUA codon-specific tRNA(Ile) that contains the anticodon CAU, in an ATP-dependent manner. Cytidine is converted to lysidine, thus changing the amino acid specificity of the tRNA from methionine to isoleucine. This is tRNA(Ile)-lysidine synthase from Campylobacter jejuni subsp. jejuni serotype O:2 (strain ATCC 700819 / NCTC 11168).